Here is a 384-residue protein sequence, read N- to C-terminus: Alanine racemase (384 aa).

Residue lysine 42 is the Proton acceptor; specific for D-alanine of the active site. Lysine 42 is modified (N6-(pyridoxal phosphate)lysine). Substrate is bound at residue arginine 140. Tyrosine 271 serves as the catalytic Proton acceptor; specific for L-alanine. Substrate is bound at residue methionine 319.

Belongs to the alanine racemase family. In terms of assembly, homodimer. Pyridoxal 5'-phosphate is required as a cofactor.

It catalyses the reaction L-alanine = D-alanine. The protein operates within amino-acid biosynthesis; D-alanine biosynthesis; D-alanine from L-alanine: step 1/1. Its function is as follows. Catalyzes the interconversion of L-alanine and D-alanine. The sequence is that of Alanine racemase (alr) from Mycobacterium tuberculosis (strain CDC 1551 / Oshkosh).